We begin with the raw amino-acid sequence, 1147 residues long: Protein lin-41 (1147 aa).

A disordered region spans residues 1-93 (MATIVPCSLE…PPSMIQSPQQ (93 aa)). Positions 33–47 (SGNELSMGGSSSEGD) are enriched in low complexity. Positions 48–65 (SMSHHRGEHSPNHHHQDN) are enriched in basic and acidic residues. Residues 84 to 93 (PPSMIQSPQQ) are compositionally biased toward low complexity. The RING-type zinc-finger motif lies at 114–155 (CSVCSKSSTIGVLPFVCAHKTCQSCYQMTPSSYDRRACKLCG). The B box-type; atypical zinc finger occupies 366–412 (MGPIQCQGCESKISFAYCMQCQEALCIHCVQAHQRVRATKQHAFVEL). Zn(2+)-binding residues include cysteine 371, cysteine 374, cysteine 394, and histidine 398. Residues 565-618 (AFDTHVNALEERRKELLKRVETVKNLKLSVLISQAESLQSKQIDLQQAIQTATK) adopt a coiled-coil conformation. Residues 723 to 817 (ACGDLLSSSI…ISGCPTTMDI (95 aa)) form a Filamin repeat. NHL repeat units lie at residues 832–875 (ILTF…FDKD), 879–922 (ISKF…FDEN), 926–969 (LLKF…FTPQ), 974–1017 (RKCG…LSPR), 1022–1065 (MKVY…FASD), and 1107–1147 (SAPT…IRVF). The interval 1104–1123 (AFSSAPTPLTPSPRQLLDRP) is disordered.

This sequence belongs to the TRIM/RBCC family.

Its subcellular location is the cytoplasm. It is found in the P-body. Its function is as follows. Heterochronic protein which acts downstream of let-7 in temporal patterning. Plays a role in the developmental timing of postembryonic hypodermal seam cell division and fusion events and adult alae production. Represses lin-29 during late larval stages, which prevents terminal differentiation of hypodermal seam cells and promotes their division. Involved in post-transcriptional gene regulation, uses two independent pathways. Has direct and specific RNA-binding activity and, depending on the location (5'UTR or 3'UTR) of the target site, triggers either mRNA decay or repression of translation. Degrades the mRNA of transcription factor dmd-3 to govern the timing and extent of male tail tip morphogenesis. Plays a role in the sexual maturation of the nervous system. This chain is Protein lin-41, found in Caenorhabditis elegans.